The primary structure comprises 156 residues: Ribosomal RNA large subunit methyltransferase H (156 aa).

S-adenosyl-L-methionine contacts are provided by residues Leu73, Gly104, and Leu123 to Leu128.

The protein belongs to the RNA methyltransferase RlmH family. In terms of assembly, homodimer.

It is found in the cytoplasm. The catalysed reaction is pseudouridine(1915) in 23S rRNA + S-adenosyl-L-methionine = N(3)-methylpseudouridine(1915) in 23S rRNA + S-adenosyl-L-homocysteine + H(+). Its function is as follows. Specifically methylates the pseudouridine at position 1915 (m3Psi1915) in 23S rRNA. This chain is Ribosomal RNA large subunit methyltransferase H, found in Hahella chejuensis (strain KCTC 2396).